We begin with the raw amino-acid sequence, 2494 residues long: Polyprotein P1234 (2494 aa).

One can recognise an Alphavirus-like MT domain in the interval 28–257; it reads EATQVTDNDH…EERILLRSWH (230 aa). Positions 242–261 are nsP1 membrane-binding; sequence GSTIYTEERILLRSWHLPNV. A lipid anchor (S-palmitoyl cysteine; by host) is attached at Cys417. The (+)RNA virus helicase ATP-binding domain occupies 674–839; sequence CVKKGDAGPM…HEICTEVYHK (166 aa). Position 719 to 726 (719 to 726) interacts with a ribonucleoside 5'-triphosphate; it reads GVPGSGKS. The region spanning 840 to 988 is the (+)RNA virus helicase C-terminal domain; that stretch reads SISRRCTKTV…LEEWQAEHDA (149 aa). A Peptidase C9 domain is found at 1001 to 1320; sequence DVFQNKVNVC…VVLNNIYQGS (320 aa). Positions 1002–1021 are nucleolus localization signal; the sequence is VFQNKVNVCWAKALEPVLAT. Cys1010 (for cysteine protease nsP2 activity) is an active-site residue. The short motif at 1054–1063 is the Nuclear export signal element; that stretch reads TRFFGVDIDS. His1079 functions as the For cysteine protease nsP2 activity in the catalytic mechanism. Positions 1177–1181 match the Nuclear localization signal motif; the sequence is PGKRV. In terms of domain architecture, Macro spans 1328 to 1486; it reads APAYRVVRGD…RIKEAITRKE (159 aa). Residues Asp1337, Asn1351, Gly1359, Gly1438, Ile1439, and Tyr1440 each contribute to the ADP-D-ribose site. Zn(2+) contacts are provided by Cys1589, Cys1591, Cys1614, and Cys1632. Disordered regions lie at residues 1667–1711 and 1764–1794; these read LVPR…ASSG and IPSI…GSHT. Over residues 1671 to 1686 the composition is skewed to pro residues; it reads RPAPPVPVPARIPSPP. Polar residues predominate over residues 1687 to 1711; that stretch reads CTSTNGSTTSIQSLGEDQSASASSG. Residues 1798–1810 form a binding to host G3BP family members region; the sequence is LITFDSVAEILED. A binding to host FXR family members region spans residues 1858–1874; that stretch reads PPGVARVISAAEFDEFV. The RdRp catalytic domain occupies 2252 to 2367; that stretch reads AVLETDIASF…GVTSDALMAE (116 aa).

Interacts with non-structural protein 3. Interacts with RNA-directed RNA polymerase nsP4. Interacts with protease nsP2. interacts with itself. In terms of assembly, interacts with mRNA-capping enzyme nsP1. Interacts with host DDX1. Interacts with host DDX3. Interacts (via C-terminus) with host FXR1; this interaction inhibits the formation of host stress granules on viral mRNAs and the nsp3-FXR1 complexes bind viral RNAs and probably orchestrate the assembly of viral replication complexes. Interacts (via C-terminus) with host FXR2; this interaction inhibits the formation of host stress granules on viral mRNAs and the nsp3-FXR2 complexes bind viral RNAs and probably orchestrate the assembly of viral replication complexes. Interacts (via C-terminus) with host FMR1; this interaction inhibits the formation of host stress granules on viral mRNAs and the nsp3-FMR1 complexes bind viral RNAs and probably orchestrate the assembly of viral replication complexes. Interacts (via C-terminus) with host G3BP1; this interaction inhibits the formation of host stress granules on viral mRNAs and the nsp3-G3BP1 complexes bind viral RNAs and probably orchestrate the assembly of viral replication complexes. Interacts (via C-terminus) with host G3BP2; this interaction inhibits the formation of host stress granules on viral mRNAs and the nsp3-G3BP2 complexes bind viral RNAs and probably orchestrate the assembly of viral replication complexes. As to quaternary structure, interacts with mRNA-capping enzyme nsP1. Interacts with protease nsP2. interacts with itself. Interacts with RNA-directed RNA polymerase nsP4. Interacts with mRNA-capping enzyme nsP1. Interacts with KPNA1/karyopherin-alpha1; this interaction probably allows the active transport of protease nsP2 into the host nucleus. Requires Mg(2+) as cofactor. Mn(2+) is required as a cofactor. In terms of processing, specific enzymatic cleavages in vivo yield mature proteins. The processing of the polyprotein is temporally regulated. In early stages (1.7 hpi), P1234 is first cleaved in trans through its nsP2 protease activity, releasing P123' and nsP4, which associate to form the early replication complex. At the same time, P1234 is also cut at the nsP1/nsP2 site early in infection but with lower efficiency. After replication of the viral minus-strand RNAs (4 hpi), the polyproteins are cut at the nsP1/nsP2 and nsP2/nsP3 sites very efficiently, preventing accumulation of P123' and P1234 and allowing the formation of the late replication complex. NsP3'/nsP4 site is not cleaved anymore and P34 is produced rather than nsP4. Post-translationally, specific enzymatic cleavages in vivo yield mature proteins. The processing of the polyprotein is temporally regulated. In early stages (1.7 hpi), P123 is cleaved at the nsP1/nsP2 site with low efficiency. After replication of the viral minus-strand RNAs (4 hpi), the polyproteins are cut at the nsP1/nsP2 and nsP2/nsP3 sites very efficiently, preventing accumulation of P123 and allowing the formation of the late replication complex. Specific enzymatic cleavages in vivo yield mature proteins. The processing of the polyprotein is temporally regulated. In early stages (1.7 hpi), P123' is cleaved at the nsP1/nsP2 site with low efficiency. After replication of the viral minus-strand RNAs (4 hpi), the polyproteins are cut at the nsP1/nsP2 and nsP2/nsP3 sites very efficiently, preventing accumulation of P123' and allowing the formation of the late replication complex. In terms of processing, palmitoylated by host palmitoyltransferases ZDHHC2 and ZDHHC19. Post-translationally, phosphorylated by host on serines and threonines. Ubiquitinated; targets the protein for rapid degradation via the ubiquitin system. Nsp4 is present in extremely low quantities due to low frequency of translation through the amber stop-codon and the degradation by the ubiquitin pathway.

It localises to the host cytoplasmic vesicle membrane. It is found in the host cell membrane. The protein resides in the host cell projection. Its subcellular location is the host filopodium. The protein localises to the host nucleus. It localises to the host cytoplasm. It carries out the reaction GTP + S-adenosyl-L-methionine = N(7)-methyl-GTP + S-adenosyl-L-homocysteine. The catalysed reaction is N(7)-methyl-GTP + L-histidyl-[protein] = N(tele)-(N(7)-methylguanosine 5'-phospho)-L-histidyl-[protein] + diphosphate. The enzyme catalyses N(tele)-(N(7)-methylguanosine 5'-phospho)-L-histidyl-[protein] + a 5'-end diphospho-(purine-ribonucleoside) in mRNA + H(+) = a 5'-end (N(7)-methyl 5'-triphosphoguanosine)-(purine-ribonucleoside) in mRNA + L-histidyl-[protein]. It catalyses the reaction a 5'-end triphospho-ribonucleoside in mRNA + H2O = a 5'-end diphospho-ribonucleoside in mRNA + phosphate + H(+). It carries out the reaction a ribonucleoside 5'-triphosphate + H2O = a ribonucleoside 5'-diphosphate + phosphate + H(+). The catalysed reaction is ATP + H2O = ADP + phosphate + H(+). The enzyme catalyses RNA(n) + a ribonucleoside 5'-triphosphate = RNA(n+1) + diphosphate. It catalyses the reaction 4-O-(ADP-D-ribosyl)-L-aspartyl-[protein] + H2O = L-aspartyl-[protein] + ADP-D-ribose + H(+). It carries out the reaction 5-O-(ADP-D-ribosyl)-L-glutamyl-[protein] + H2O = L-glutamyl-[protein] + ADP-D-ribose + H(+). The catalysed reaction is RNA(n) + ATP = RNA(n)-3'-adenine ribonucleotide + diphosphate. The enzyme catalyses ADP-alpha-D-ribose 1''-phosphate + H2O = ADP-D-ribose + phosphate. With respect to regulation, inhibited by sinefungin. Functionally, inactive precursor of the viral replicase, which is activated by cleavages carried out by the viral protease nsP2. Its function is as follows. The early replication complex formed by the polyprotein P123 and nsP4 synthesizes the minus-strand RNAs (antigenome). Polyprotein P123 is a short-lived polyprotein that accumulates during early stage of infection. As soon P123 is cleaved into mature proteins, the plus-strand RNAs synthesis begins. In terms of biological role, the early replication complex formed by the polyprotein P123' and nsP4 synthesizes minus-strand RNAs (antigenome). Polyprotein P123' is a short-lived polyprotein that accumulates during early stage of infection. As soon P123' is cleaved into mature proteins, the plus-strand RNAs synthesis begins. Cytoplasmic capping enzyme that catalyzes two virus-specific reactions: methyltransferase and nsP1 guanylyltransferase. mRNA-capping is necessary since all viral RNAs are synthesized in the cytoplasm, and host capping enzymes are restricted to the nucleus. The enzymatic reaction involves a covalent link between 7-methyl-GMP and nsP1, whereas eukaryotic capping enzymes form a covalent complex only with GMP. NsP1 capping consists in the following reactions: GTP is first methylated into 7-methyl-GMP and then is covalently linked to nsP1 to form the m7GMp-nsP1 complex from which 7-methyl-GMP complex is transferred to the mRNA to create the cap structure. NsP1 is also needed for the initiation of the minus-strand RNAs synthesis. Probably serves as a membrane anchor for the replication complex composed of nsP1-nsP4. Nsp1 is needed for the initiation of the minus-strand RNAs synthesis. Palmitoylated nsP1 is remodeling host cell cytoskeleton, and induces filopodium-like structure formation at the surface of the host cell. Functionally, multifunctional protein whose N-terminus is part of the RNA polymerase complex and displays NTPase, RNA triphosphatase and helicase activities. NTPase and RNA triphosphatase are involved in viral RNA capping and helicase keeps a check on the dsRNA replication intermediates. The C-terminus harbors a protease that specifically cleaves the polyproteins and releases the mature proteins. Required for the shutoff of minus-strand RNAs synthesis. Inhibits host translation to ensure maximal viral gene expression and evade host immune response. Its function is as follows. Seems to be essential for minus-strand RNAs and subgenomic 26S mRNAs synthesis. Displays mono-ADP-ribosylhydrolase activity. ADP-ribosylation is a post-translational modification that controls various processes of the host cell and the virus probably needs to revert it for optimal viral replication. Binds proteins of FXR and G3BP families and sequesters them into the viral RNA replication complexes thereby inhibiting the formation of host stress granules on viral mRNAs. The nsp3-FXR and nsp3-G3BP complexes bind viral RNAs and probably orchestrate the assembly of viral replication complexes, thanks to the ability of G3BP and FXR family members to self-assemble and bind DNA. In terms of biological role, seems to be essential for minus-strand RNAs and subgenomic 26S mRNAs synthesis. Displays mono-ADP-ribosylhydrolase activity. ADP-ribosylation is a post-translational modification that controls various processes of the host cell and the virus probably needs to revert it for optimal viral replication. Binds proteins of FXR family and sequesters them into the viral RNA replication complexes thereby inhibiting the formation of host stress granules on viral mRNAs. The nsp3'-FXR complexes bind viral RNAs and probably orchestrate the assembly of viral replication complexes, thanks to the ability of FXR family members to self-assemble and bind DNA. RNA dependent RNA polymerase. Replicates genomic and antigenomic RNA by recognizing replications specific signals. The early replication complex formed by the polyprotein P123 and nsP4 synthesizes minus-strand RNAs. The late replication complex composed of fully processed nsP1-nsP4 is responsible for the production of genomic and subgenomic plus-strand RNAs. The protein is Polyprotein P1234 of Aedes (Human).